A 207-amino-acid polypeptide reads, in one-letter code: Large ribosomal subunit protein bL25 (207 aa).

Residues E171–E207 are disordered. Residues E196 to E207 show a composition bias toward basic and acidic residues.

Belongs to the bacterial ribosomal protein bL25 family. CTC subfamily. As to quaternary structure, part of the 50S ribosomal subunit; part of the 5S rRNA/L5/L18/L25 subcomplex. Contacts the 5S rRNA. Binds to the 5S rRNA independently of L5 and L18.

In terms of biological role, this is one of the proteins that binds to the 5S RNA in the ribosome where it forms part of the central protuberance. The protein is Large ribosomal subunit protein bL25 of Listeria monocytogenes serotype 4b (strain F2365).